We begin with the raw amino-acid sequence, 148 residues long: Large ribosomal subunit protein bL9 (148 aa).

The protein belongs to the bacterial ribosomal protein bL9 family.

Functionally, binds to the 23S rRNA. The chain is Large ribosomal subunit protein bL9 from Staphylococcus aureus (strain Newman).